The primary structure comprises 292 residues: UPF0761 membrane protein Ping_3482 (292 aa).

The next 6 membrane-spanning stretches (helical) occupy residues 43 to 63, 100 to 120, 139 to 159, 179 to 199, 209 to 229, and 243 to 263; these read LLSI…FPVF, MSMM…STID, FTIY…SLAL, LLSL…YTLV, ALIG…LFRL, and ALAV…IVLI.

It belongs to the UPF0761 family.

It is found in the cell inner membrane. In Psychromonas ingrahamii (strain DSM 17664 / CCUG 51855 / 37), this protein is UPF0761 membrane protein Ping_3482.